The primary structure comprises 62 residues: Chromatin protein Cren7 2 (62 aa).

It belongs to the Cren7 family. In terms of assembly, monomer. Post-translationally, methylated at multiple sites, to varying extents.

It localises to the chromosome. The protein localises to the cytoplasm. Its function is as follows. A chromatin protein, binds double-stranded DNA without sequence specificity. Constrains negative DNA supercoils. The sequence is that of Chromatin protein Cren7 2 (cren7-2) from Hyperthermus butylicus (strain DSM 5456 / JCM 9403 / PLM1-5).